Reading from the N-terminus, the 399-residue chain is Mannan endo-1,4-beta-mannosidase 4 (399 aa).

An N-terminal signal peptide occupies residues 1-26; the sequence is MNNSIILIFVAILIIFPNEFSKPTRA. Residues Trp-88 and Asn-203 each coordinate substrate. Residue Glu-204 is the Proton donor of the active site. Tyr-279 is a substrate binding site. Catalysis depends on Glu-318, which acts as the Nucleophile. Cys-347 and Cys-354 are disulfide-bonded. Residue Trp-360 participates in substrate binding.

Belongs to the glycosyl hydrolase 5 (cellulase A) family. Expressed in flowers and fruit pericarp.

The protein resides in the secreted. It carries out the reaction Random hydrolysis of (1-&gt;4)-beta-D-mannosidic linkages in mannans, galactomannans and glucomannans.. Functionally, possesses endo-beta-mannanase and mannan transglycosylase activities. May be involved in cell wall degradation during fruit ripening. The protein is Mannan endo-1,4-beta-mannosidase 4 (MAN4) of Solanum lycopersicum (Tomato).